Here is a 447-residue protein sequence, read N- to C-terminus: N-succinylarginine dihydrolase (447 aa).

Substrate-binding positions include 19 to 28 (AGLSFGNEAS), asparagine 110, and 137 to 138 (HR). The active site involves glutamate 174. Substrate is bound at residue arginine 212. The active site involves histidine 248. Aspartate 250 and asparagine 359 together coordinate substrate. Cysteine 365 (nucleophile) is an active-site residue.

It belongs to the succinylarginine dihydrolase family. In terms of assembly, homodimer.

It carries out the reaction N(2)-succinyl-L-arginine + 2 H2O + 2 H(+) = N(2)-succinyl-L-ornithine + 2 NH4(+) + CO2. It functions in the pathway amino-acid degradation; L-arginine degradation via AST pathway; L-glutamate and succinate from L-arginine: step 2/5. Its function is as follows. Catalyzes the hydrolysis of N(2)-succinylarginine into N(2)-succinylornithine, ammonia and CO(2). The protein is N-succinylarginine dihydrolase of Salmonella gallinarum (strain 287/91 / NCTC 13346).